Here is a 214-residue protein sequence, read N- to C-terminus: GTP-binding nuclear protein GSP1/Ran (214 aa).

The Small GTPase Ran-type domain maps to 4–168; the sequence is EVAAFKLVLV…LWLARKLAGN (165 aa). Residue 15 to 22 coordinates GTP; that stretch reads DGGTGKTT. The segment at 34–42 is switch-I; that stretch reads NRYNATLGV. Residues glycine 65, 119 to 122, and 147 to 149 each bind GTP; these read NKVD and SAK. Residues 65 to 81 are switch-II; the sequence is GQEKFGGLRDGYYINGQ.

The protein belongs to the small GTPase superfamily. Ran family. In terms of assembly, found in a nuclear export complex with RanGTP, exportin and pre-miRNA.

It localises to the nucleus. Functionally, GTP-binding protein involved in nucleocytoplasmic transport. Required for the import of protein into the nucleus and also for RNA export. Involved in chromatin condensation and control of cell cycle. In Yarrowia lipolytica (strain CLIB 122 / E 150) (Yeast), this protein is GTP-binding nuclear protein GSP1/Ran (GSP1).